The following is a 1541-amino-acid chain: ATP-binding cassette sub-family C member 2 (1541 aa).

The Extracellular portion of the chain corresponds to 1–26 (MDKFCNSTFWDLSLLESPEADLPLCF). Asn-6 carries N-linked (GlcNAc...) asparagine glycosylation. Residues 27-47 (EQTVLVWIPLGFLWLLAPWQL) form a helical membrane-spanning segment. At 48-67 (YSVYRSRTKRSSITKFYLAK) the chain is on the cytoplasmic side. The helical transmembrane segment at 68–88 (QVFVVFLLILAAIDLSLALTE) threads the bilayer. Topologically, residues 89 to 92 (DTGQ) are extracellular. Residues 93-113 (ATVPPVRYTNPILYLCTWLLV) form a helical membrane-spanning segment. Over 114-125 (LAVQHSRQWCVR) the chain is Cytoplasmic. The helical transmembrane segment at 126 to 146 (KNSWFLSLFWILSVLCGVFQF) threads the bilayer. Over 147 to 164 (QTLIRALLKDSKSNMAYS) the chain is Extracellular. Residues 165 to 185 (YLFFVSYGFQIVLLILTAFSG) traverse the membrane as a helical segment. Residues 186-309 (PSDSTQTPSV…DYPKSWLIKS (124 aa)) lie on the Cytoplasmic side of the membrane. A phosphoserine mark is found at Ser-279 and Ser-281. Residues 310–330 (LFKTFHVVILKSFILKLIHDL) form a helical membrane-spanning segment. Residues 318–601 (ILKSFILKLI…LPMVTSSILQ (284 aa)) form the ABC transmembrane type-1 1 domain. At 331–356 (LVFLNPQLLKLLIGFVKSSNSYVWFG) the chain is on the extracellular side. The helical transmembrane segment at 357-377 (YICAILMFAVTLIQSFCLQSY) threads the bilayer. Residues 378–433 (FQHCFVLGMCVRTTVMSSIYKKALTLSNLARKQYTIGETVNLMSVDSQKLMDATNY) are Cytoplasmic-facing. The helical transmembrane segment at 434-454 (MQLVWSSVIQITLSIFFLWRE) threads the bilayer. The Extracellular segment spans residues 455–457 (LGP). A helical membrane pass occupies residues 458–478 (SILAGVGVMVLLIPVNGVLAT). The Cytoplasmic segment spans residues 479–540 (KIRNIQVQNM…NLLRFGQLQS (62 aa)). Residues 541–561 (LLIFILQITPILVSVVTFSVY) form a helical membrane-spanning segment. The Extracellular portion of the chain corresponds to 562–583 (VLVDSANVLNAEKAFTSITLFN). A helical membrane pass occupies residues 584–604 (ILRFPLSMLPMVTSSILQASV). Residues 605–967 (SVDRLERYLG…VKFSIYLKYL (363 aa)) lie on the Cytoplasmic side of the membrane. The region spanning 633–857 (VKFSEASFTW…KGVFARNWKT (225 aa)) is the ABC transporter 1 domain. 667 to 674 (GTVGSGKS) is an ATP binding site. Disordered regions lie at residues 862–881 (SGPEGEATVNNDSEAEDDDD) and 901–923 (RENSLRRTLSRSSRSSSRRGKSL). Ser-874 carries the post-translational modification Phosphoserine. Residues 906 to 915 (RRTLSRSSRS) show a composition bias toward low complexity. A phosphoserine mark is found at Ser-922 and Ser-926. A helical membrane pass occupies residues 968–988 (QAVGWWSILFIILFYGLNNVA). The ABC transmembrane type-1 2 domain maps to 975-1260 (ILFIILFYGL…LVRMTSEAET (286 aa)). Over 989–1029 (FIGSNLWLSAWTSDSDNLNGTNNSSSHRDMRIGVFGALGLA) the chain is Extracellular. N-linked (GlcNAc...) asparagine glycosylation is found at Asn-1007, Asn-1010, and Asn-1011. A helical transmembrane segment spans residues 1030–1050 (QGICLLISTLWSIYACRNASK). Residues 1051-1093 (ALHGQLLTNILRAPMRFFDTTPTGRIVNRFSGDISTVDDLLPQ) lie on the Cytoplasmic side of the membrane. Residues 1094–1114 (TLRSWMMCFFGIAGTLVMICM) traverse the membrane as a helical segment. Position 1115 (Ala-1115) is a topological domain, extracellular. A helical transmembrane segment spans residues 1116–1136 (TPVFAIIIIPLSILYISVQVF). Topologically, residues 1137–1207 (YVATSRQLRR…TSNRWLAIRL (71 aa)) are cytoplasmic. A helical membrane pass occupies residues 1208–1228 (ELVGNLVVFCSALLLVIYRKT). At 1229–1230 (LT) the chain is on the extracellular side. A helical transmembrane segment spans residues 1231-1251 (GDVVGFVLSNALNITQTLNWL). Over 1252–1541 (VRMTSEAETN…GIENVNHTEL (290 aa)) the chain is Cytoplasmic. The ABC transporter 2 domain maps to 1296–1530 (IQFNNYQVRY…RGSFYLMAKE (235 aa)). 1330–1337 (GRTGAGKS) contacts ATP. Ser-1434 carries the phosphoserine modification.

It belongs to the ABC transporter superfamily. ABCC family. Conjugate transporter (TC 3.A.1.208) subfamily. Mainly expressed in the liver.

Its subcellular location is the apical cell membrane. The enzyme catalyses an S-substituted glutathione(in) + ATP + H2O = an S-substituted glutathione(out) + ADP + phosphate + H(+). The catalysed reaction is taurolithocholate 3-sulfate(in) + ATP + H2O = taurolithocholate 3-sulfate(out) + ADP + phosphate + H(+). It carries out the reaction ATP + H2O + xenobioticSide 1 = ADP + phosphate + xenobioticSide 2.. It catalyses the reaction 17beta-estradiol 17-O-(beta-D-glucuronate)(in) + ATP + H2O = 17beta-estradiol 17-O-(beta-D-glucuronate)(out) + ADP + phosphate + H(+). The enzyme catalyses leukotriene C4(in) + ATP + H2O = leukotriene C4(out) + ADP + phosphate + H(+). The catalysed reaction is (4Z,15Z)-bilirubin IXalpha C8-beta-D-glucuronoside(in) + ATP + H2O = (4Z,15Z)-bilirubin IXalpha C8-beta-D-glucuronoside(out) + ADP + phosphate + H(+). It carries out the reaction (4Z,15Z)-bilirubin IXalpha C8,C12-beta-D-bisglucuronoside(in) + ATP + H2O = (4Z,15Z)-bilirubin IXalpha C8,C12-beta-D-bisglucuronoside(out) + ADP + phosphate + H(+). Its function is as follows. ATP-dependent transporter of the ATP-binding cassette (ABC) family that binds and hydrolyzes ATP to enable active transport of various substrates including many drugs, toxicants and endogenous compound across cell membranes. Transports a wide variety of conjugated organic anions such as sulfate-, glucuronide- and glutathione (GSH)-conjugates of endo- and xenobiotics substrates. Mediates hepatobiliary excretion of mono- and bis-glucuronidated bilirubin molecules and therefore play an important role in bilirubin detoxification. Also mediates hepatobiliary excretion of others glucuronide conjugates such as 17beta-estradiol 17-glucosiduronic acid and leukotriene C4. Transports sulfated bile salt such as taurolithocholate sulfate. Transports various anticancer drugs, such as anthracycline, vinca alkaloid and methotrexate and HIV-drugs such as protease inhibitors. This is ATP-binding cassette sub-family C member 2 from Rattus norvegicus (Rat).